We begin with the raw amino-acid sequence, 485 residues long: Adenosylhomocysteinase (485 aa).

3 residues coordinate substrate: T64, D139, and E205. An NAD(+)-binding site is contributed by 206–208; it reads TTT. Residues K235 and D239 each contribute to the substrate site. Residues N240, 269–274, E292, N327, 348–350, and N397 contribute to the NAD(+) site; these read GYGDVG and IGH.

It belongs to the adenosylhomocysteinase family. NAD(+) serves as cofactor.

It carries out the reaction S-adenosyl-L-homocysteine + H2O = L-homocysteine + adenosine. It functions in the pathway amino-acid biosynthesis; L-homocysteine biosynthesis; L-homocysteine from S-adenosyl-L-homocysteine: step 1/1. In terms of biological role, adenosylhomocysteine is a competitive inhibitor of S-adenosyl-L-methionine-dependent methyl transferase reactions; therefore adenosylhomocysteinase may play a key role in the control of methylations via regulation of the intracellular concentration of adenosylhomocysteine. This Medicago sativa (Alfalfa) protein is Adenosylhomocysteinase (SAHH).